A 160-amino-acid polypeptide reads, in one-letter code: Cytochrome b6-f complex subunit 4 (160 aa).

Transmembrane regions (helical) follow at residues 36 to 56 (LLYIFPVVIFGTFACCIGLAV), 95 to 115 (LLGVLAMAAVPVGLLTVPFIE), and 131 to 151 (ILFLVGTLVAVWLGIGATFPI).

The protein belongs to the cytochrome b family. PetD subfamily. In terms of assembly, the 4 large subunits of the cytochrome b6-f complex are cytochrome b6, subunit IV (17 kDa polypeptide, petD), cytochrome f and the Rieske protein, while the 4 small subunits are petG, petL, petM and petN. The complex functions as a dimer.

Its subcellular location is the plastid. The protein resides in the chloroplast thylakoid membrane. Its function is as follows. Component of the cytochrome b6-f complex, which mediates electron transfer between photosystem II (PSII) and photosystem I (PSI), cyclic electron flow around PSI, and state transitions. In Chlamydomonas moewusii (Chlamydomonas eugametos), this protein is Cytochrome b6-f complex subunit 4.